The following is a 377-amino-acid chain: Chaperone protein DnaJ (377 aa).

A J domain is found at 5-70; it reads DFYETLGVSK…QKRAAYDRFG (66 aa). The CR-type zinc finger occupies 138 to 216; that stretch reads GKTAQIRVPT…CHGQGRVTEE (79 aa). Zn(2+)-binding residues include Cys-151, Cys-154, Cys-168, Cys-171, Cys-190, Cys-193, Cys-204, and Cys-207. 4 CXXCXGXG motif repeats span residues 151-158, 168-175, 190-197, and 204-211; these read CDVCSGSG, CATCQGSG, CPTCHGRG, and CGKCHGQG.

It belongs to the DnaJ family. As to quaternary structure, homodimer. It depends on Zn(2+) as a cofactor.

It is found in the cytoplasm. Its function is as follows. Participates actively in the response to hyperosmotic and heat shock by preventing the aggregation of stress-denatured proteins and by disaggregating proteins, also in an autonomous, DnaK-independent fashion. Unfolded proteins bind initially to DnaJ; upon interaction with the DnaJ-bound protein, DnaK hydrolyzes its bound ATP, resulting in the formation of a stable complex. GrpE releases ADP from DnaK; ATP binding to DnaK triggers the release of the substrate protein, thus completing the reaction cycle. Several rounds of ATP-dependent interactions between DnaJ, DnaK and GrpE are required for fully efficient folding. Also involved, together with DnaK and GrpE, in the DNA replication of plasmids through activation of initiation proteins. The polypeptide is Chaperone protein DnaJ (Agrobacterium fabrum (strain C58 / ATCC 33970) (Agrobacterium tumefaciens (strain C58))).